Here is a 205-residue protein sequence, read N- to C-terminus: Small ribosomal subunit protein uS4 (205 aa).

Residues 18 to 49 form a disordered region; sequence NIWGRPKSPVNKREYGPGQHGQRRKGKLSDFG. One can recognise an S4 RNA-binding domain in the interval 94–157; sequence RRLDTVVYRA…KQLALVLEAN (64 aa).

The protein belongs to the universal ribosomal protein uS4 family. In terms of assembly, part of the 30S ribosomal subunit. Contacts protein S5. The interaction surface between S4 and S5 is involved in control of translational fidelity.

In terms of biological role, one of the primary rRNA binding proteins, it binds directly to 16S rRNA where it nucleates assembly of the body of the 30S subunit. Functionally, with S5 and S12 plays an important role in translational accuracy. This Nitrobacter hamburgensis (strain DSM 10229 / NCIMB 13809 / X14) protein is Small ribosomal subunit protein uS4.